The primary structure comprises 169 residues: NADH-quinone oxidoreductase subunit I (169 aa).

4Fe-4S ferredoxin-type domains lie at 61 to 90 and 100 to 129; these read RRYDNGEERCIACKLCEAVCPALAITIESE and TRYDIDLTKCIFCGFCEESCPVDSIVETHI. The [4Fe-4S] cluster site is built by C70, C73, C76, C80, C109, C112, C115, and C119.

This sequence belongs to the complex I 23 kDa subunit family. In terms of assembly, NDH-1 is composed of 14 different subunits. Subunits NuoA, H, J, K, L, M, N constitute the membrane sector of the complex. [4Fe-4S] cluster is required as a cofactor.

It localises to the cell inner membrane. It carries out the reaction a quinone + NADH + 5 H(+)(in) = a quinol + NAD(+) + 4 H(+)(out). NDH-1 shuttles electrons from NADH, via FMN and iron-sulfur (Fe-S) centers, to quinones in the respiratory chain. The immediate electron acceptor for the enzyme in this species is believed to be ubiquinone. Couples the redox reaction to proton translocation (for every two electrons transferred, four hydrogen ions are translocated across the cytoplasmic membrane), and thus conserves the redox energy in a proton gradient. In Verminephrobacter eiseniae (strain EF01-2), this protein is NADH-quinone oxidoreductase subunit I.